We begin with the raw amino-acid sequence, 190 residues long: Xanthine phosphoribosyltransferase 2 (190 aa).

Xanthine contacts are provided by L20 and N27. Residue 129–133 coordinates 5-phospho-alpha-D-ribose 1-diphosphate; it reads ANGCA. K157 is a xanthine binding site.

Belongs to the purine/pyrimidine phosphoribosyltransferase family. Xpt subfamily. Homodimer.

It localises to the cytoplasm. The enzyme catalyses XMP + diphosphate = xanthine + 5-phospho-alpha-D-ribose 1-diphosphate. The protein operates within purine metabolism; XMP biosynthesis via salvage pathway; XMP from xanthine: step 1/1. Its function is as follows. Converts the preformed base xanthine, a product of nucleic acid breakdown, to xanthosine 5'-monophosphate (XMP), so it can be reused for RNA or DNA synthesis. The sequence is that of Xanthine phosphoribosyltransferase 2 from Clostridium botulinum (strain ATCC 19397 / Type A).